Consider the following 274-residue polypeptide: 3',5'-cyclic adenosine monophosphate phosphodiesterase CpdA (274 aa).

The Fe cation site is built by D21, H23, D63, N93, H163, H202, and H204. AMP is bound by residues H23, D63, and 93–94 (NH). Residue H204 participates in AMP binding.

Belongs to the cyclic nucleotide phosphodiesterase class-III family. Fe(2+) serves as cofactor.

It catalyses the reaction 3',5'-cyclic AMP + H2O = AMP + H(+). Functionally, hydrolyzes cAMP to 5'-AMP. Plays an important regulatory role in modulating the intracellular concentration of cAMP, thereby influencing cAMP-dependent processes. The sequence is that of 3',5'-cyclic adenosine monophosphate phosphodiesterase CpdA from Vibrio vulnificus (strain CMCP6).